The following is a 384-amino-acid chain: MREFLEETLQKIEAAGLRRSLRPLEPLGPTRALFNGREVTLFCTNNYLGLTHHPRVTARAQEALRKYGTGSGAARLVSGHNPLLQALEEALARCKGSPRALVFPTGYTANLAVIGTLAGREDVIFCDRLCHASLLDGCLLSGAKLVRFSHNDADSLRRLLNQHTGRRRFIVTEGLFSMDGDIPPLPEFYTLAQEFEAILIVDDAHGTGVLGPNGRGTVADAGIPAERIVISGTLSKALASLGGFVTGPGLLSEFLLNRARSFIFTTALPPVSAAAALAALEVLEAEPAILEGLWENVMRFRQGLNARGLPASGNSPIIPLILGSPERALRAAENLLEQGYYVPAIRPPAVPPGTARLRITVSAAHTPAEIDGFLNALGKALEEA.

R19 provides a ligand contact to substrate. Position 106–107 (106–107 (GY)) interacts with pyridoxal 5'-phosphate. H131 lines the substrate pocket. Pyridoxal 5'-phosphate is bound by residues S177, 202-205 (DDAH), and 233-236 (TLSK). Residue K236 is modified to N6-(pyridoxal phosphate)lysine.

This sequence belongs to the class-II pyridoxal-phosphate-dependent aminotransferase family. BioF subfamily. As to quaternary structure, homodimer. The cofactor is pyridoxal 5'-phosphate.

The enzyme catalyses 6-carboxyhexanoyl-[ACP] + L-alanine + H(+) = (8S)-8-amino-7-oxononanoate + holo-[ACP] + CO2. It participates in cofactor biosynthesis; biotin biosynthesis. In terms of biological role, catalyzes the decarboxylative condensation of pimeloyl-[acyl-carrier protein] and L-alanine to produce 8-amino-7-oxononanoate (AON), [acyl-carrier protein], and carbon dioxide. The polypeptide is Putative 8-amino-7-oxononanoate synthase (bioF) (Desulforudis audaxviator (strain MP104C)).